The primary structure comprises 475 residues: Putative aldehyde dehydrogenase SERP1729 (475 aa).

201–207 serves as a coordination point for NAD(+); it reads GDGSGVG. Active-site residues include glutamate 245 and cysteine 279.

The protein belongs to the aldehyde dehydrogenase family.

The catalysed reaction is an aldehyde + NAD(+) + H2O = a carboxylate + NADH + 2 H(+). This Staphylococcus epidermidis (strain ATCC 35984 / DSM 28319 / BCRC 17069 / CCUG 31568 / BM 3577 / RP62A) protein is Putative aldehyde dehydrogenase SERP1729.